Consider the following 217-residue polypeptide: Nascent polypeptide-associated complex subunit alpha-like protein 2 (217 aa).

The tract at residues M1–L81 is disordered. Residues P37–A60 show a composition bias toward acidic residues. Residues S70–L135 enclose the NAC-A/B domain. The 38-residue stretch at V178–L215 folds into the UBA domain.

This sequence belongs to the NAC-alpha family.

In terms of biological role, may promote appropriate targeting of ribosome-nascent polypeptide complexes. The chain is Nascent polypeptide-associated complex subunit alpha-like protein 2 from Arabidopsis thaliana (Mouse-ear cress).